Consider the following 424-residue polypeptide: Otefin (424 aa).

The LEM domain occupies 1–30; sequence MADVDDFDSLSNAELRAKMLAQGLPNIPVT. The segment at 1 to 50 is required for binding to Med and germline stem cell maintenance; that stretch reads MADVDDFDSLSNAELRAKMLAQGLPNIPVTDSSRKVLVKRLRASIGGQAS. A disordered region spans residues 42–186; it reads RASIGGQASP…SSKRADREEN (145 aa). A phosphoserine mark is found at S44, S50, and S54. T63 is subject to Phosphothreonine. The span at 65 to 80 shows a compositional bias: low complexity; it reads APAPGAPSAPAAASTP. The short motif at 92 to 99 is the Nuclear localization signal element; it reads ATKARRTI. Basic and acidic residues predominate over residues 103 to 133; sequence EAKEPVRRLPEEAIRRRPDEADRLRSEEPVA. The residue at position 152 (S152) is a Phosphoserine. Over residues 157–170 the composition is skewed to basic and acidic residues; sequence SERKVVEPLRKPET. Phosphoserine is present on residues S192 and S198. A disordered region spans residues 259–278; that stretch reads PSVPSARAQTTSSTRSYDYA. The segment covering 262-274 has biased composition (low complexity); sequence PSARAQTTSSTRS. Residues 271-400 are required for binding to Med; sequence STRSYDYASN…NRWLNSLEQK (130 aa). Phosphoserine is present on S321. T324 is subject to Phosphothreonine. S326 is modified (phosphoserine). Residue T358 is modified to Phosphothreonine. Phosphoserine occurs at positions 378 and 385. Residues 400 to 424 form an essential for nuclear membrane localization and germline stem cell maintenance region; it reads KYHIKSKLFIVLLVLLLIGVYYIFY. The segment at 406–424 is essential for nuclear membrane localization; that stretch reads KLFIVLLVLLLIGVYYIFY.

In terms of assembly, interacts with Med. Interacts with Lam. Interacts with aurA, alphaTub84B, gammaTub23C and gammaTub37C. Interacts with Nemp. In terms of processing, phosphorylation at Thr-63 by aurA may be required for exit from mitosis. May be phosphorylated by Cdk1 and Pka-C1. As to expression, expressed in all cell types of the germarium and testis. Expressed in nurse cells, follicle cells and oocytes.

The protein resides in the nucleus inner membrane. It localises to the nucleus. Its subcellular location is the nucleoplasm. The protein localises to the cytoplasm. It is found in the chromosome. The protein resides in the cytoskeleton. It localises to the spindle pole. Its subcellular location is the microtubule organizing center. The protein localises to the centrosome. Functionally, inner nuclear membrane protein. Involved in the attachment of membrane vesicles to chromatin during nuclear assembly, and is probably required for centrosome maturation and cell cycle progression during mitosis. Essential for differentiation of certain tissues and the maintenance of progenitor cell populations. Required for the differentiation and maintenance of male and female germline stem cells (GSCs), as well as the maintenance of somatic cells in the GSC niche. This role is likely to be independent of the BMP (Dpp) pathway that negatively regulates bam transcription during GSC differentiation. During development, plays essential and redundant functions with the other LEM domain proteins; bocks and MAN1. Also has a redundant but important role with bocks during larval development. The polypeptide is Otefin (Drosophila melanogaster (Fruit fly)).